The following is a 200-amino-acid chain: Glycerol-3-phosphate acyltransferase (200 aa).

4 helical membrane-spanning segments follow: residues 1-21 (MITV…FAVV), 84-104 (VIAG…FLAF), 116-136 (ILLG…MVVA), and 159-179 (FLLE…LLIL).

The protein belongs to the PlsY family. Probably interacts with PlsX.

It localises to the cell inner membrane. It catalyses the reaction an acyl phosphate + sn-glycerol 3-phosphate = a 1-acyl-sn-glycero-3-phosphate + phosphate. It participates in lipid metabolism; phospholipid metabolism. Functionally, catalyzes the transfer of an acyl group from acyl-phosphate (acyl-PO(4)) to glycerol-3-phosphate (G3P) to form lysophosphatidic acid (LPA). This enzyme utilizes acyl-phosphate as fatty acyl donor, but not acyl-CoA or acyl-ACP. The sequence is that of Glycerol-3-phosphate acyltransferase from Nitrosomonas europaea (strain ATCC 19718 / CIP 103999 / KCTC 2705 / NBRC 14298).